We begin with the raw amino-acid sequence, 71 residues long: SRY-related protein LG28 (71 aa).

A DNA-binding region (HMG box) is located at residues 1–68; that stretch reads VKRPMNAFMV…KHMADYPDYK (68 aa).

It localises to the nucleus. This chain is SRY-related protein LG28, found in Eublepharis macularius (Leopard gecko).